The following is a 258-amino-acid chain: Snake venom serine protease 3 (258 aa).

The N-terminal stretch at 1–18 (MVLIRVLANLLILQLSYA) is a signal peptide. The propeptide occupies 19–24 (QKSSEL). A Peptidase S1 domain is found at 25–249 (VIGGDECNIN…YTDWIQSIIA (225 aa)). Intrachain disulfides connect cysteine 31/cysteine 163, cysteine 50/cysteine 66, cysteine 98/cysteine 256, cysteine 142/cysteine 210, cysteine 174/cysteine 189, and cysteine 200/cysteine 225. An N-linked (GlcNAc...) asparagine glycan is attached at asparagine 44. The active-site Charge relay system is histidine 65. A glycan (N-linked (GlcNAc...) asparagine) is linked at asparagine 103. The active-site Charge relay system is aspartate 110. Residues asparagine 117, asparagine 121, and asparagine 154 are each glycosylated (N-linked (GlcNAc...) asparagine). Serine 204 functions as the Charge relay system in the catalytic mechanism. N-linked (GlcNAc...) asparagine glycosylation is present at asparagine 251.

The protein belongs to the peptidase S1 family. Snake venom subfamily. In terms of assembly, monomer. In terms of tissue distribution, expressed by the venom gland.

Its subcellular location is the secreted. Its function is as follows. Snake venom serine protease that may act in the hemostasis system of the prey. The polypeptide is Snake venom serine protease 3 (TLG3) (Craspedocephalus gramineus (Bamboo pit viper)).